A 613-amino-acid chain; its full sequence is Histone acetyltransferase KAT7 (613 aa).

The tract at residues 1–175 (MAIGVVKRNA…SDLSHRPKRR (175 aa)) is disordered. A phosphoserine mark is found at S12, S52, S55, S59, and S66. Positions 44–59 (VTRSSARLSQSSQDSS) are enriched in low complexity. A phosphothreonine mark is found at T87 and T90. The segment covering 98–107 (QTRSSGSETE) has biased composition (polar residues). S104 carries the post-translational modification Phosphoserine. T106 is modified (phosphothreonine). A compositionally biased stretch (basic and acidic residues) spans 112 to 127 (FSDRETKNTADHDESP). S113 and S126 each carry phosphoserine. T130 carries the phosphothreonine modification. A compositionally biased stretch (low complexity) spans 136 to 147 (PSSESDIDISSP). Residues 150–170 (SHDESIAKDMSLKDSGSDLSH) show a composition bias toward basic and acidic residues. 4 positions are modified to phosphoserine: S160, S164, S166, and S180. The CCHHC-type zinc-finger motif lies at 178–221 (HESYNFNMKCPTPGCNSLGHLTGKHERHFSISGCPLYHNLSADE). N6-acetyllysine occurs at positions 201 and 279. K325 is covalently cross-linked (Glycyl lysine isopeptide (Lys-Gly) (interchain with G-Cter in SUMO2)). Residues 334–609 (EGSNMIKTIA…MDPSCLKWTP (276 aa)) enclose the MYST-type HAT domain. A Glycyl lysine isopeptide (Lys-Gly) (interchain with G-Cter in ubiquitin) cross-link involves residue K340. The C2HC MYST-type zinc finger occupies 367–392 (LYMCEFCLKYMKSQTILRRHMAKCVW). Zn(2+) contacts are provided by C370, C373, H386, and C390. Residue K434 is modified to N6-acetyllysine; by autocatalysis. Residues 477-479 (ILT) and 485-490 (RQGYGK) contribute to the acetyl-CoA site. S508 bears the Phosphoserine mark. Residue E510 is the Proton donor/acceptor of the active site. Residues S514 and S523 each contribute to the acetyl-CoA site.

The protein belongs to the MYST (SAS/MOZ) family. Component of the HBO1 complex composed of KAT7/HBO1, MEAF6, ING4 or ING5, and one scaffold subunit: complexes containing BRPF scaffold (BRPF1, BRD1/BRPF2 or BRPF3) direct KAT7/HBO1 specificity towards H3K14ac, while complexes containing JADE scaffold (JADE1, JADE2 and JADE3) mediate acetylation of histone H4. Interacts with MCM2 and ORC1. Interacts with the androgen receptor (AR) in the presence of dihydrotestosterone. Interacts with CDT1. Interacts with MAP2K1 and CUL1. Interacts with p53/TP53; leading to inhibit histone acetyltransferase activity. Phosphorylated at Ser-52 and Ser-55 by ATR in response to DNA damage, promoting its ubiquitination by the CRL4(DDB2) complex and subsequent degradation. Phosphorylation at Ser-52 and Ser-55 by ATR in response to ultraviolet-induced DNA, promotes localization to DNA damage sites. Phosphorylation at Ser-59 by PLK1 during mitosis seems important for prereplicative complex formation and DNA replication licensing, and requires prior phosphorylation at Thr-87 and Thr-90 by CDK1. Phosphorylated by MAP2K1, which accelerates its degradation. In terms of processing, ubiquitinated at Lys-340, leading to proteasomal degradation. Ubiquitinated by the CRL4(DDB2) complex following phosphorylation by ATR, leading to its subsequent degradation. Post-translationally, autoacetylation at Lys-434 is required for proper function. In terms of tissue distribution, widely expressed in adult tissues.

It localises to the nucleus. It is found in the chromosome. Its subcellular location is the centromere. The protein localises to the cytoplasm. The protein resides in the cytosol. The catalysed reaction is L-lysyl-[protein] + acetyl-CoA = N(6)-acetyl-L-lysyl-[protein] + CoA + H(+). Histone acetyltransferase activity is inhibited by GMNN in the context of a complex with CDT1, inhibiting histone H4 acetylation and DNA replication licensing. Catalytic subunit of histone acetyltransferase HBO1 complexes, which specifically mediate acetylation of histone H3 at 'Lys-14' (H3K14ac), thereby regulating various processes, such as gene transcription, protein ubiquitination, immune regulation, stem cell pluripotent and self-renewal maintenance and embryonic development. Some complexes also catalyze acetylation of histone H4 at 'Lys-5', 'Lys-8' and 'Lys-12' (H4K5ac, H4K8ac and H4K12ac, respectively), regulating DNA replication initiation, regulating DNA replication initiation. Specificity of the HBO1 complexes is determined by the scaffold subunit: complexes containing BRPF scaffold (BRPF1, BRD1/BRPF2 or BRPF3) direct KAT7/HBO1 specificity towards H3K14ac, while complexes containing JADE (JADE1, JADE2 and JADE3) scaffold direct KAT7/HBO1 specificity towards histone H4. H3K14ac promotes transcriptional elongation by facilitating the processivity of RNA polymerase II. Acts as a key regulator of hematopoiesis by forming a complex with BRD1/BRPF2, directing KAT7/HBO1 specificity towards H3K14ac and promoting erythroid differentiation. H3K14ac is also required for T-cell development. KAT7/HBO1-mediated acetylation facilitates two consecutive steps, licensing and activation, in DNA replication initiation: H3K14ac facilitates the activation of replication origins, and histone H4 acetylation (H4K5ac, H4K8ac and H4K12ac) facilitates chromatin loading of MCM complexes, promoting DNA replication licensing. Acts as a positive regulator of centromeric CENPA assembly: recruited to centromeres and mediates histone acetylation, thereby preventing centromere inactivation mediated by SUV39H1, possibly by increasing histone turnover/exchange. Involved in nucleotide excision repair: phosphorylation by ATR in response to ultraviolet irradiation promotes its localization to DNA damage sites, where it mediates histone acetylation to facilitate recruitment of XPC at the damaged DNA sites. Acts as an inhibitor of NF-kappa-B independently of its histone acetyltransferase activity. Its function is as follows. Plays a central role in the maintenance of leukemia stem cells in acute myeloid leukemia (AML). Acts by mediating acetylation of histone H3 at 'Lys-14' (H3K14ac), thereby facilitating the processivity of RNA polymerase II to maintain the high expression of key genes, such as HOXA9 and HOXA10 that help to sustain the functional properties of leukemia stem cells. This is Histone acetyltransferase KAT7 from Mus musculus (Mouse).